The chain runs to 405 residues: L-rhamnonate dehydratase (405 aa).

Substrate-binding residues include histidine 33 and arginine 59. Mg(2+)-binding residues include aspartate 226, glutamate 252, and glutamate 280. Catalysis depends on histidine 329, which acts as the Proton acceptor. Glutamate 349 contacts substrate.

This sequence belongs to the mandelate racemase/muconate lactonizing enzyme family. RhamD subfamily. Homooctamer; tetramer of dimers. Requires Mg(2+) as cofactor.

The catalysed reaction is L-rhamnonate = 2-dehydro-3-deoxy-L-rhamnonate + H2O. Functionally, catalyzes the dehydration of L-rhamnonate to 2-keto-3-deoxy-L-rhamnonate (KDR). The sequence is that of L-rhamnonate dehydratase from Salmonella paratyphi C (strain RKS4594).